A 158-amino-acid chain; its full sequence is Sorbin and SH3 domain-containing protein 2 (158 aa).

Residues 1–46 (MRAATPLQTVDRPKDWYKTMFKQIHMVHKPDDDTDMYNTPYTYNAG) enclose the SoHo domain. The segment at 28–158 (HKPDDDTDMY…TKPQAGRRKV (131 aa)) is disordered. The segment covering 50–66 (SPYSAQSHPAAKTQTYR) has biased composition (polar residues). Over residues 71 to 81 (SHSDNGTDAFK) the composition is skewed to basic and acidic residues. Serine 73 bears the Phosphoserine mark. The segment covering 86–99 (PVPPPHVPPPVPPL) has biased composition (pro residues). Over residues 100–136 (RPRDRSSTEKHDWDPPDRKVDTRKFRSEPRSIFEYEP) the composition is skewed to basic and acidic residues. Alanine 153 bears the Alanine amide mark.

In terms of assembly, interacts with ABL1/c-Abl, ABL2/v-Abl/Arg, ACTN, AKT1, CBL, PALLD and PAK1. Interacts with ABL, CBL, DNM1, DNM2, FLOT1, AFDN, PTK2B/PYK2, SAPAP, SPTAN1, SYNJ1, SYNJ2, VCL/vinculin, and WASF. Interacts with PTPN12 and WASF1 via its SH3 domains; this interaction may mediate the partial PTPN12 and WASF1 translocation to focal adhesion sites. Ubiquitinated by CBL. Post-translationally, dephosphorylated by PTPN12. Expressed in duodenum.

The protein localises to the cytoplasm. The protein resides in the perinuclear region. Its subcellular location is the apical cell membrane. It is found in the cell junction. It localises to the focal adhesion. The protein localises to the cell projection. The protein resides in the lamellipodium. Its function is as follows. Adapter protein that plays a role in the assembling of signaling complexes, being a link between ABL kinases and actin cytoskeleton. Can form complex with ABL1 and CBL, thus promoting ubiquitination and degradation of ABL1 or with AKT1 and PAK1, thus mediating AKT1-mediated activation of PAK1. May play a role in the regulation of pancreatic cell adhesion, possibly by acting on WASF1 phosphorylation, enhancing phosphorylation by ABL1, as well as dephosphorylation by PTPN12. Increases water and sodium absorption in the intestine and gall-bladder. The protein is Sorbin and SH3 domain-containing protein 2 (SORBS2) of Sus scrofa (Pig).